A 149-amino-acid chain; its full sequence is MLRNRITSRRSISSSVSALANYGKPQNPAIDTTVKMRIQPIKREGETMEIKRARLIYQSRKRGILESDLLLSRFAKKYLNEFTEAELDEYDRLLDEPDWDIYYWATKNYDVTPLPDKWKDSKILKMLQEDAKNDDREILRMPELDLEQK.

It belongs to the SDHAF2 family. In terms of assembly, interacts with the flavoprotein subunit within the SDH catalytic dimer.

The protein resides in the mitochondrion matrix. Functionally, plays an essential role in the assembly of succinate dehydrogenase (SDH), an enzyme complex (also referred to as respiratory complex II) that is a component of both the tricarboxylic acid (TCA) cycle and the mitochondrial electron transport chain, and which couples the oxidation of succinate to fumarate with the reduction of ubiquinone (coenzyme Q) to ubiquinol. Required for flavinylation (covalent attachment of FAD) of the flavoprotein subunit of the SDH catalytic dimer. The chain is Succinate dehydrogenase assembly factor 2, mitochondrial from Scheffersomyces stipitis (strain ATCC 58785 / CBS 6054 / NBRC 10063 / NRRL Y-11545) (Yeast).